The following is a 402-amino-acid chain: Argininosuccinate synthase (402 aa).

ATP is bound by residues alanine 9 to serine 17 and alanine 36. L-citrulline is bound by residues tyrosine 87 and serine 92. Glycine 117 lines the ATP pocket. 3 residues coordinate L-aspartate: threonine 119, asparagine 123, and aspartate 124. An L-citrulline-binding site is contributed by asparagine 123. 5 residues coordinate L-citrulline: arginine 127, serine 176, serine 185, glutamate 261, and tyrosine 273.

The protein belongs to the argininosuccinate synthase family. Type 1 subfamily. As to quaternary structure, homotetramer.

It localises to the cytoplasm. It catalyses the reaction L-citrulline + L-aspartate + ATP = 2-(N(omega)-L-arginino)succinate + AMP + diphosphate + H(+). Its pathway is amino-acid biosynthesis; L-arginine biosynthesis; L-arginine from L-ornithine and carbamoyl phosphate: step 2/3. This Deinococcus radiodurans (strain ATCC 13939 / DSM 20539 / JCM 16871 / CCUG 27074 / LMG 4051 / NBRC 15346 / NCIMB 9279 / VKM B-1422 / R1) protein is Argininosuccinate synthase.